Here is a 108-residue protein sequence, read N- to C-terminus: MREKMAEATETQASETSTRGRPKTRVGIVTSNKMQKTVVVTVQRRAPHPKYGKIMSLREKYKAHVEDHDYPKKITINEGDRVRIAETKPASKDKRWRVVEVLEKSKNV.

The tract at residues 1-26 (MREKMAEATETQASETSTRGRPKTRV) is disordered. Low complexity predominate over residues 8–17 (ATETQASETS).

It belongs to the universal ribosomal protein uS17 family. As to quaternary structure, part of the 30S ribosomal subunit.

One of the primary rRNA binding proteins, it binds specifically to the 5'-end of 16S ribosomal RNA. This chain is Small ribosomal subunit protein uS17, found in Myxococcus xanthus (strain DK1622).